A 631-amino-acid polypeptide reads, in one-letter code: Peptide-N(4)-(N-acetyl-beta-glucosaminyl)asparagine amidase (631 aa).

The PUB domain occupies 34 to 97; the sequence is EAVRILLVLL…PSSNAYTLPT (64 aa). Ser126 is modified (phosphoserine). The Zn(2+) site is built by Cys246, Cys249, Cys272, and Cys273. The active-site Nucleophile is the Cys296. Catalysis depends on residues His323 and Asp340. The PAW domain maps to 441–631; the sequence is ELKGRSSGSL…YPFDLQVQLH (191 aa).

The protein belongs to the transglutaminase-like superfamily. PNGase family. Requires Zn(2+) as cofactor.

The protein resides in the cytoplasm. It carries out the reaction Hydrolysis of an N(4)-(acetyl-beta-D-glucosaminyl)asparagine residue in which the glucosamine residue may be further glycosylated, to yield a (substituted) N-acetyl-beta-D-glucosaminylamine and a peptide containing an aspartate residue.. Its function is as follows. Specifically deglycosylates the denatured form of N-linked glycoproteins in the cytoplasm and assists their proteasome-mediated degradation. Cleaves the beta-aspartyl-glucosamine (GlcNAc) of the glycan and the amide side chain of Asn, converting Asn to Asp. Prefers proteins containing high-mannose over those bearing complex type oligosaccharides. Can recognize misfolded proteins in the endoplasmic reticulum that are exported to the cytosol to be destroyed and deglycosylate them, while it has no activity toward native proteins. Deglycosylation is a prerequisite for subsequent proteasome-mediated degradation of some, but not all, misfolded glycoproteins. The sequence is that of Peptide-N(4)-(N-acetyl-beta-glucosaminyl)asparagine amidase (Pngl) from Drosophila melanogaster (Fruit fly).